The primary structure comprises 736 residues: Elongation factor 2 (736 aa).

Positions 18–234 constitute a tr-type G domain; the sequence is TRVRNIGIIA…VIDAYTASDK (217 aa). GTP contacts are provided by residues 27 to 34, 93 to 97, and 147 to 150; these read AHVDHGKT, DTPGH, and NKVD. H603 is subject to Diphthamide.

Belongs to the TRAFAC class translation factor GTPase superfamily. Classic translation factor GTPase family. EF-G/EF-2 subfamily.

Its subcellular location is the cytoplasm. Its function is as follows. Catalyzes the GTP-dependent ribosomal translocation step during translation elongation. During this step, the ribosome changes from the pre-translocational (PRE) to the post-translocational (POST) state as the newly formed A-site-bound peptidyl-tRNA and P-site-bound deacylated tRNA move to the P and E sites, respectively. Catalyzes the coordinated movement of the two tRNA molecules, the mRNA and conformational changes in the ribosome. This Saccharolobus islandicus (strain Y.N.15.51 / Yellowstone #2) (Sulfolobus islandicus) protein is Elongation factor 2.